The chain runs to 315 residues: Ribosomal protein L11 methyltransferase (315 aa).

Residues Thr-163, Gly-184, Asp-206, and Asn-248 each contribute to the S-adenosyl-L-methionine site.

Belongs to the methyltransferase superfamily. PrmA family.

It is found in the cytoplasm. The enzyme catalyses L-lysyl-[protein] + 3 S-adenosyl-L-methionine = N(6),N(6),N(6)-trimethyl-L-lysyl-[protein] + 3 S-adenosyl-L-homocysteine + 3 H(+). Methylates ribosomal protein L11. This Lacticaseibacillus paracasei (strain ATCC 334 / BCRC 17002 / CCUG 31169 / CIP 107868 / KCTC 3260 / NRRL B-441) (Lactobacillus paracasei) protein is Ribosomal protein L11 methyltransferase.